Reading from the N-terminus, the 31-residue chain is Photosystem II reaction center protein T (31 aa).

A helical transmembrane segment spans residues 3 to 23 (ALVYTFLLISTLGIIFFGIFF).

The protein belongs to the PsbT family. PSII is composed of 1 copy each of membrane proteins PsbA, PsbB, PsbC, PsbD, PsbE, PsbF, PsbH, PsbI, PsbJ, PsbK, PsbL, PsbM, PsbT, PsbY, PsbZ, Psb30/Ycf12, at least 3 peripheral proteins of the oxygen-evolving complex and a large number of cofactors. It forms dimeric complexes.

It is found in the plastid. The protein localises to the chloroplast thylakoid membrane. Functionally, found at the monomer-monomer interface of the photosystem II (PS II) dimer, plays a role in assembly and dimerization of PSII. PSII is a light-driven water plastoquinone oxidoreductase, using light energy to abstract electrons from H(2)O, generating a proton gradient subsequently used for ATP formation. This is Photosystem II reaction center protein T from Nephroselmis olivacea (Green alga).